The primary structure comprises 189 residues: Elongation factor P (189 aa).

Belongs to the elongation factor P family.

Its subcellular location is the cytoplasm. The protein operates within protein biosynthesis; polypeptide chain elongation. Involved in peptide bond synthesis. Stimulates efficient translation and peptide-bond synthesis on native or reconstituted 70S ribosomes in vitro. Probably functions indirectly by altering the affinity of the ribosome for aminoacyl-tRNA, thus increasing their reactivity as acceptors for peptidyl transferase. This Ehrlichia canis (strain Jake) protein is Elongation factor P.